We begin with the raw amino-acid sequence, 509 residues long: ATP synthase subunit alpha (509 aa).

171–178 (GDRKTGKT) provides a ligand contact to ATP.

Belongs to the ATPase alpha/beta chains family. F-type ATPases have 2 components, CF(1) - the catalytic core - and CF(0) - the membrane proton channel. CF(1) has five subunits: alpha(3), beta(3), gamma(1), delta(1), epsilon(1). CF(0) has three main subunits: a(1), b(2) and c(9-12). The alpha and beta chains form an alternating ring which encloses part of the gamma chain. CF(1) is attached to CF(0) by a central stalk formed by the gamma and epsilon chains, while a peripheral stalk is formed by the delta and b chains.

It localises to the cell inner membrane. The catalysed reaction is ATP + H2O + 4 H(+)(in) = ADP + phosphate + 5 H(+)(out). Its function is as follows. Produces ATP from ADP in the presence of a proton gradient across the membrane. The alpha chain is a regulatory subunit. This Ehrlichia chaffeensis (strain ATCC CRL-10679 / Arkansas) protein is ATP synthase subunit alpha.